The sequence spans 386 residues: F420 non-reducing hydrogenase I small subunit (386 aa).

Positions 1 to 51 (MVEMSTGTTNLVRTLDSMDFLKMDRRTFMKAVSALGATAFLGTYQTEIVNA) form a signal peptide, tat-type signal. [4Fe-4S] cluster-binding residues include C67, C70, C178, C227, H273, C276, C296, and C302. Residues C311, C330, and C333 each coordinate [3Fe-4S] cluster.

The protein belongs to the [NiFe]/[NiFeSe] hydrogenase small subunit family. Composed of a large subunit (VhoA), a small subunit (VhoG) and a cytochrome subunit (VhoC). The cofactor is [4Fe-4S] cluster. [3Fe-4S] cluster serves as cofactor. Post-translationally, predicted to be exported by the Tat system. The position of the signal peptide cleavage has not been experimentally proven.

The protein localises to the cell membrane. It carries out the reaction methanophenazine + H2 = dihydromethanophenazine. In terms of biological role, part of the F420 non-reducing hydrogenase I complex that catalyzes the reduction of methanophenazine to dihydromethanophenazine. The protein is F420 non-reducing hydrogenase I small subunit of Methanosarcina mazei (strain ATCC BAA-159 / DSM 3647 / Goe1 / Go1 / JCM 11833 / OCM 88) (Methanosarcina frisia).